The chain runs to 74 residues: Bacteriocin hiracin-JM79 (74 aa).

Residues 1 to 30 form the signal peptide; that stretch reads MKKKVLKHCVILGILGTCLAGIGTGIKVDA.

It is found in the secreted. Bacteriocin with antibacterial activity against the Gram-positive Listeria, Enterococcus, Propionibacterium, Staphylococcus and some strains of Clostridium, Lactobacillus and Pediococcus. Lacks antibacterial activity against Gram-negative bacteria. The polypeptide is Bacteriocin hiracin-JM79 (Enterococcus hirae).